Reading from the N-terminus, the 429-residue chain is Glutamate-1-semialdehyde 2,1-aminomutase 2 (429 aa).

At Lys-268 the chain carries N6-(pyridoxal phosphate)lysine.

It belongs to the class-III pyridoxal-phosphate-dependent aminotransferase family. HemL subfamily. As to quaternary structure, homodimer. Pyridoxal 5'-phosphate is required as a cofactor.

The protein localises to the cytoplasm. The catalysed reaction is (S)-4-amino-5-oxopentanoate = 5-aminolevulinate. The protein operates within porphyrin-containing compound metabolism; protoporphyrin-IX biosynthesis; 5-aminolevulinate from L-glutamyl-tRNA(Glu): step 2/2. The protein is Glutamate-1-semialdehyde 2,1-aminomutase 2 of Staphylococcus aureus (strain bovine RF122 / ET3-1).